We begin with the raw amino-acid sequence, 379 residues long: Cytochrome b (379 aa).

4 helical membrane passes run 33-53 (FGSL…FLAM), 77-98 (WLIR…YLHI), 113-133 (WNIG…GYVL), and 178-198 (FFAF…IHLL). The heme b site is built by His-83 and His-97. Heme b-binding residues include His-182 and His-196. His-201 lines the a ubiquinone pocket. 4 helical membrane passes run 226 to 246 (YKDL…ALFY), 288 to 308 (LGGV…PILH), 320 to 340 (ASQL…WIGG), and 347 to 367 (YIII…VLNP).

Belongs to the cytochrome b family. The cytochrome bc1 complex contains 3 respiratory subunits (MT-CYB, CYC1 and UQCRFS1), 2 core proteins (UQCRC1 and UQCRC2) and probably 6 low-molecular weight proteins. Requires heme b as cofactor.

It is found in the mitochondrion inner membrane. Component of the ubiquinol-cytochrome c reductase complex (complex III or cytochrome b-c1 complex) that is part of the mitochondrial respiratory chain. The b-c1 complex mediates electron transfer from ubiquinol to cytochrome c. Contributes to the generation of a proton gradient across the mitochondrial membrane that is then used for ATP synthesis. The sequence is that of Cytochrome b (mt-cyb) from Anguilla dieffenbachii (New Zealand longfin eel).